The chain runs to 910 residues: Protein translocase subunit SecA (910 aa).

Residues Q86, 104–108, and D508 each bind ATP; that span reads GEGKT. Residues C894, C896, C905, and C906 each contribute to the Zn(2+) site.

This sequence belongs to the SecA family. As to quaternary structure, monomer and homodimer. Part of the essential Sec protein translocation apparatus which comprises SecA, SecYEG and auxiliary proteins SecDF. Other proteins may also be involved. It depends on Zn(2+) as a cofactor.

The protein localises to the cell membrane. Its subcellular location is the cytoplasm. The catalysed reaction is ATP + H2O + cellular proteinSide 1 = ADP + phosphate + cellular proteinSide 2.. Part of the Sec protein translocase complex. Interacts with the SecYEG preprotein conducting channel. Has a central role in coupling the hydrolysis of ATP to the transfer of proteins into and across the cell membrane, serving as an ATP-driven molecular motor driving the stepwise translocation of polypeptide chains across the membrane. The polypeptide is Protein translocase subunit SecA (Acetivibrio thermocellus (strain ATCC 27405 / DSM 1237 / JCM 9322 / NBRC 103400 / NCIMB 10682 / NRRL B-4536 / VPI 7372) (Clostridium thermocellum)).